The primary structure comprises 48 residues: Large ribosomal subunit protein bL33A (48 aa).

This sequence belongs to the bacterial ribosomal protein bL33 family.

This Shouchella clausii (strain KSM-K16) (Alkalihalobacillus clausii) protein is Large ribosomal subunit protein bL33A.